The primary structure comprises 138 residues: Putative pre-16S rRNA nuclease (138 aa).

It belongs to the YqgF nuclease family.

The protein localises to the cytoplasm. In terms of biological role, could be a nuclease involved in processing of the 5'-end of pre-16S rRNA. The sequence is that of Putative pre-16S rRNA nuclease from Bacteroides thetaiotaomicron (strain ATCC 29148 / DSM 2079 / JCM 5827 / CCUG 10774 / NCTC 10582 / VPI-5482 / E50).